The primary structure comprises 545 residues: Coiled-coil domain-containing protein 60 (545 aa).

Positions Asn-72–Gln-99 form a coiled coil. The interval Pro-224–Glu-284 is disordered. The span at Arg-238–Ser-259 shows a compositional bias: low complexity.

This Mus musculus (Mouse) protein is Coiled-coil domain-containing protein 60 (Ccdc60).